Consider the following 113-residue polypeptide: UPF0482 protein YnfB (113 aa).

Positions 1–28 are cleaved as a signal peptide; it reads MKITLSKRIDLLAFLLPCALALSTTVHA.

Belongs to the UPF0482 family.

This is UPF0482 protein YnfB from Escherichia coli O157:H7.